A 223-amino-acid chain; its full sequence is Cutinase (223 aa).

An N-terminal signal peptide occupies residues 1–19 (MKFFAFSMLIGEASPIVLA). Cysteines 46 and 124 form a disulfide. The active-site Nucleophile is the S135. An intrachain disulfide couples C185 to C192. D189 is a catalytic residue. The Proton donor/acceptor role is filled by H202.

This sequence belongs to the cutinase family. Post-translationally, the 2 disulfide bonds play a critical role in holding the catalytic residues in juxta-position; reduction of the disulfide bridges results in the complete inactivation of the enzyme.

It is found in the secreted. It carries out the reaction cutin + H2O = cutin monomers.. In terms of biological role, catalyzes the hydrolysis of complex carboxylic polyesters found in the cell wall of plants. Degrades cutin, a macromolecule that forms the structure of the plant cuticle. Allows pathogenic fungi to penetrate through the cuticular barrier into the host plant during the initial stage of fungal infection. This chain is Cutinase (CUT), found in Didymella rabiei (Chickpea ascochyta blight fungus).